The chain runs to 423 residues: ATP-citrate synthase alpha chain protein 2 (423 aa).

Citrate is bound by residues N343, T345, and R376.

This sequence belongs to the succinate/malate CoA ligase beta subunit family. In terms of assembly, heterooctamer of 4 alpha and 4 beta chains.

It is found in the cytoplasm. Its subcellular location is the cytosol. The catalysed reaction is oxaloacetate + acetyl-CoA + ADP + phosphate = citrate + ATP + CoA. Functionally, ATP citrate-lyase is the primary enzyme responsible for the synthesis of cytosolic acetyl-CoA, used for the elongation of fatty acids and biosynthesis of isoprenoids, flavonoids and malonated derivatives. May supply substrate to the cytosolic acetyl-CoA carboxylase, which generates the malonyl-CoA used for the synthesis of a multitude of compounds, including very long chain fatty acids and flavonoids. Required for normal growth and development and elongation of C18 fatty acids to C20 to C24 fatty acids in seeds. In contrast to all known animal ACL enzymes having a homomeric structure, plant ACLs are composed of alpha and beta chains. The chain is ATP-citrate synthase alpha chain protein 2 (ACLA-2) from Arabidopsis thaliana (Mouse-ear cress).